We begin with the raw amino-acid sequence, 475 residues long: Nitrogenase vanadium-iron protein beta chain (475 aa).

Residues C31, C56, C115, and S153 each contribute to the [8Fe-7S] cluster site.

Belongs to the NifD/NifK/NifE/NifN family. In terms of assembly, hexamer of two alpha, two beta, and two delta chains. [8Fe-7S] cluster is required as a cofactor.

It catalyses the reaction N2 + 8 reduced [2Fe-2S]-[ferredoxin] + 16 ATP + 16 H2O = H2 + 8 oxidized [2Fe-2S]-[ferredoxin] + 2 NH4(+) + 16 ADP + 16 phosphate + 6 H(+). In terms of biological role, this vanadium-iron protein is part of the nitrogenase complex that catalyzes the key enzymatic reactions in nitrogen fixation. The sequence is that of Nitrogenase vanadium-iron protein beta chain (vnfK) from Azotobacter vinelandii.